Here is a 251-residue protein sequence, read N- to C-terminus: MKTTKFNIENLDLFYGENQALKSINLPIPTRQVTALIGPSGCGKSTLLRCLNRMNDLIEGVTITGKLTMDGQDVYGNIDVSDLRIRVGMVFQKPNPFPMSIYENVAYGLRAQGIKDKKHLDEVVERSLRGAALWDEVKDRLKSHAFGLSGGQQQRLCIARTIAMEPDVILMDEPTSALDPIATHKIEELMEDLKKNYTIVIVTHSMQQARRISDRTAFFLMGELVEHDDTQVIFSNPRDDRTRGYVNGDFG.

An ABC transporter domain is found at Phe-6–Val-246. Gly-38–Ser-45 lines the ATP pocket.

It belongs to the ABC transporter superfamily. Phosphate importer (TC 3.A.1.7) family. In terms of assembly, the complex is composed of two ATP-binding proteins (PstB), two transmembrane proteins (PstC and PstA) and a solute-binding protein (PstS).

The protein resides in the cell inner membrane. The enzyme catalyses phosphate(out) + ATP + H2O = ADP + 2 phosphate(in) + H(+). Its function is as follows. Part of the ABC transporter complex PstSACB involved in phosphate import. Responsible for energy coupling to the transport system. The chain is Phosphate import ATP-binding protein PstB 2 from Vibrio cholerae serotype O1 (strain ATCC 39315 / El Tor Inaba N16961).